The following is a 243-amino-acid chain: Vesicle-associated membrane protein-associated protein B/C (243 aa).

A2 carries the N-acetylalanine modification. The Cytoplasmic segment spans residues 2–222 (AKVEQVLSLE…PTGKEEGLST (221 aa)). One can recognise an MSP domain in the interval 7–124 (VLSLEPQHEL…MDSKLRCVFE (118 aa)). At S146 the chain carries Phosphoserine. Residue K147 forms a Glycyl lysine isopeptide (Lys-Gly) (interchain with G-Cter in SUMO1) linkage. T150 bears the Phosphothreonine mark. A phosphoserine mark is found at S156, S158, S159, S160, and S206. Positions 159–196 (SSLDDTEVKKVMEECKRLQGEVQRLREENKQFKEEDGL) form a coiled coil. Residues 223 to 243 (RLLALVVLFFIVGVIIGKIAL) traverse the membrane as a helical; Anchor for type IV membrane protein segment.

It belongs to the VAMP-associated protein (VAP) (TC 9.B.17) family. In terms of assembly, homodimer, and heterodimer with VAPA. Interacts with VAMP1 and VAMP2. Interacts (via MSP domain) with ZFYVE27. Interacts with RMDN3. Interacts with KIF5A in a ZFYVE27-dependent manner. Interacts (via MSP domain) with STARD3 (via phospho-FFAT motif). Interacts with STARD3NL (via FFAT motif). Interacts with CERT1. Interacts with PLEKHA3 and SACM1L to form a ternary complex. Interacts with VPS13A (via FFAT motif). Interacts with RB1CC1 (via phosphorylated FFAT motif), MIGA2 (via phosphorylated FFAT motif), RMDN3 (via phosphorylated FFAT motif), OSBPL1A (via FFAT motif), KCNB1 (via phosphorylated FFAT motif) and KCNB2 (via phosphorylated FFAT motif). Interacts (via MSP domain) with WDR44 (via FFAT motif); the interactions connect the endoplasmic reticulum (ER) with the endosomal tubule. (Microbial infection) Interacts (via MSP domain) with hepatitis C virus (HCV) non-structural protein 5A (via disordered domain D3). Interacts with HCV RNA-directed RNA polymerase. Ubiquitous. Isoform 1 predominates.

It localises to the endoplasmic reticulum membrane. Endoplasmic reticulum (ER)-anchored protein that mediates the formation of contact sites between the ER and endosomes via interaction with FFAT motif-containing proteins such as STARD3 or WDR44. Interacts with STARD3 in a FFAT motif phosphorylation dependent manner. Via interaction with WDR44 participates in neosynthesized protein export. Participates in the endoplasmic reticulum unfolded protein response (UPR) by inducing ERN1/IRE1 activity. Involved in cellular calcium homeostasis regulation. The sequence is that of Vesicle-associated membrane protein-associated protein B/C from Homo sapiens (Human).